Here is a 687-residue protein sequence, read N- to C-terminus: Protein FAR1-RELATED SEQUENCE 1 (687 aa).

An FAR1 domain is found at 35–137; sequence EFYKEYANSV…VKEHNHEIFT (103 aa). The 44-residue stretch at 211-254 folds into the MULE domain; that stretch reads KAMHGCRPRVILTKHDQMLKEAVLEVFPSSRHCFYMWDTLGQMP. The SWIM-type zinc finger occupies 440-476; that stretch reads FVVVWNSESSEVVCSCRLFELKGFLCRHAMIVLQMSG. Residues 540-562 adopt a coiled-coil conformation; sequence NVLNEALRKWENKSNLIQNLEES.

It belongs to the FHY3/FAR1 family. As to expression, expressed in rosette and cauline leaves, inflorescences stems, flowers and siliques.

It is found in the nucleus. Functionally, putative transcription activator involved in regulating light control of development. The chain is Protein FAR1-RELATED SEQUENCE 1 (FRS1) from Arabidopsis thaliana (Mouse-ear cress).